The chain runs to 60 residues: UPF0434 protein Vapar_2640 (60 aa).

This sequence belongs to the UPF0434 family.

This is UPF0434 protein Vapar_2640 from Variovorax paradoxus (strain S110).